Consider the following 294-residue polypeptide: Cytidine deaminase (294 aa).

CMP/dCMP-type deaminase domains lie at 48–168 (DEDA…FGPK) and 186–294 (LTGD…VLLG). 89-91 (NME) contacts substrate. A Zn(2+)-binding site is contributed by His-102. Residue Glu-104 is the Proton donor of the active site. Residues Cys-129 and Cys-132 each contribute to the Zn(2+) site.

Belongs to the cytidine and deoxycytidylate deaminase family. As to quaternary structure, homodimer. The cofactor is Zn(2+).

It catalyses the reaction cytidine + H2O + H(+) = uridine + NH4(+). The catalysed reaction is 2'-deoxycytidine + H2O + H(+) = 2'-deoxyuridine + NH4(+). Its function is as follows. This enzyme scavenges exogenous and endogenous cytidine and 2'-deoxycytidine for UMP synthesis. The sequence is that of Cytidine deaminase from Salmonella choleraesuis (strain SC-B67).